Reading from the N-terminus, the 258-residue chain is Caffeoyl-CoA O-methyltransferase 1 (258 aa).

Residues 1–16 are compositionally biased toward low complexity; the sequence is MATTATEAAPAQEQQA. Residues 1–31 form a disordered region; sequence MATTATEAAPAQEQQANGNGEQKTRHSEVGH. Residues 22-31 show a composition bias toward basic and acidic residues; it reads QKTRHSEVGH. K32 is a substrate binding site. Residues T74, E96, 98–99, S104, D122, and A151 each bind S-adenosyl-L-methionine; that span reads GV. D174 provides a ligand contact to substrate. Residue D174 participates in a divalent metal cation binding. D176 serves as a coordination point for S-adenosyl-L-methionine. D200 and N201 together coordinate a divalent metal cation. A substrate-binding site is contributed by N205.

This sequence belongs to the class I-like SAM-binding methyltransferase superfamily. Cation-dependent O-methyltransferase family. CCoAMT subfamily. A divalent metal cation is required as a cofactor.

The catalysed reaction is (E)-caffeoyl-CoA + S-adenosyl-L-methionine = (E)-feruloyl-CoA + S-adenosyl-L-homocysteine + H(+). It participates in aromatic compound metabolism; phenylpropanoid biosynthesis. In terms of biological role, methylates caffeoyl-CoA to feruloyl-CoA and 5-hydroxyferuloyl-CoA to sinapoyl-CoA. Plays a role in the synthesis of feruloylated polysaccharides. Involved in the reinforcement of the plant cell wall. Also involved in the responding to wounding or pathogen challenge by the increased formation of cell wall-bound ferulic acid polymers. This Zea mays (Maize) protein is Caffeoyl-CoA O-methyltransferase 1 (CCOAOMT1).